A 119-amino-acid polypeptide reads, in one-letter code: Large ribosomal subunit protein bL20 (119 aa).

The protein belongs to the bacterial ribosomal protein bL20 family.

In terms of biological role, binds directly to 23S ribosomal RNA and is necessary for the in vitro assembly process of the 50S ribosomal subunit. It is not involved in the protein synthesizing functions of that subunit. The protein is Large ribosomal subunit protein bL20 of Streptococcus agalactiae serotype Ia (strain ATCC 27591 / A909 / CDC SS700).